The chain runs to 353 residues: MATDGLHENETLASLKSEAESLKGKLEEERAKLHDVELHQVAERVEALGQFVMKTRRTLKGHGNKVLCMDWCKDKRRIVSSSQDGKVIVWDSFTTNKEHAVTMPCTWVMACAYAPSGCAIACGGLDNKCSVYPLTFDKNENMAAKKKSVAMHTNYLSACSFTNSDMQILTASGDGTCALWDVESGQLLQSFHGHGADVLCLDLAPSETGNTFVSGGCDKKAMVWDMRSGQCVQAFETHESDVNSVRYYPSGDAFASGSDDATCRLYDLRADREVAIYSKESIIFGASSVDFSLSGRLLFAGYNDYTINVWDVLKGSRVSILFGHENRVSTLRVSPDGTAFCSGSWDHTLRVWA.

WD repeat units lie at residues 61–100 (GHGNKVLCMDWCKDKRRIVSSSQDGKVIVWDSFTTNKEHA), 103–142 (MPCTWVMACAYAPSGCAIACGGLDNKCSVYPLTFDKNENM), 151–192 (MHTN…QSFH), 194–236 (HGAD…QAFE), 237–276 (THESDVNSVRYYPSGDAFASGSDDATCRLYDLRADREVAI), 278–320 (SKES…RVSI), and 323–352 (GHENRVSTLRVSPDGTAFCSGSWDHTLRVW).

This sequence belongs to the WD repeat G protein beta family. As to quaternary structure, component of a complex composed of RGS9 (isoform RGS9-1), GNB5 and RGS9BP; within this complex, the presence of GNB5 stabilizes both itself and RGS9 and increases RGS9 GTPase-activating protein (GAP) activity. Interacts with RGS7, forming the RGS7-GNB5 complex; within this complex, the presence of GNB5 increases RGS7 GTPase-activating protein (GAP) activity. Interacts with GPR158; promotes the GTPase activator activity of the RGS7-GNB5 complex in absence of glycine, in contrast GTPase activator activity of the RGS7-GNB5 complex is inhibited in presence of glycine. Interacts with RGS6. As to expression, detected in brain.

The protein localises to the membrane. Functionally, enhances GTPase-activating protein (GAP) activity of regulator of G protein signaling (RGS) proteins, such as RGS7 and RGS9, hence involved in the termination of the signaling initiated by the G protein coupled receptors (GPCRs) by accelerating the GTP hydrolysis on the G-alpha subunits, thereby promoting their inactivation. Increases RGS7 GTPase-activating protein (GAP) activity, thereby regulating mood and cognition. Increases RGS9 GTPase-activating protein (GAP) activity, hence contributes to the deactivation of G protein signaling initiated by D(2) dopamine receptors. May play an important role in neuronal signaling, including in the parasympathetic, but not sympathetic, control of heart rate. This chain is Guanine nucleotide-binding protein subunit beta-5 (Gnb5), found in Rattus norvegicus (Rat).